Consider the following 185-residue polypeptide: Peptidoglycan-recognition protein SC1a/b (185 aa).

Positions 1–21 (MVSKVALLLAVLVCSQYMAQG) are cleaved as a signal peptide. Residues 46-170 (SYAIIHHTAG…RQVSATECPG (125 aa)) enclose the N-acetylmuramoyl-L-alanine amidase domain. His51 is a binding site for Zn(2+). An intrachain disulfide couples Cys58 to Cys64. His160 and Cys168 together coordinate Zn(2+).

The protein belongs to the N-acetylmuramoyl-L-alanine amidase 2 family. Requires Zn(2+) as cofactor.

It is found in the secreted. It catalyses the reaction Hydrolyzes the link between N-acetylmuramoyl residues and L-amino acid residues in certain cell-wall glycopeptides.. In terms of biological role, N-acetylmuramyl-L-alanine amidase involved in innate immunity by degrading bacterial peptidoglycans (PGN). Plays a scavenger role by digesting biologically active PGN into biologically inactive fragments. Has no direct bacteriolytic activity. The sequence is that of Peptidoglycan-recognition protein SC1a/b (PGRP-SC1a) from Drosophila simulans (Fruit fly).